The primary structure comprises 212 residues: Ribosome maturation factor RimM (212 aa).

The 77-residue stretch at 105–181 (EEEFYYADLI…IDSITAGLDN (77 aa)) folds into the PRC barrel domain. A disordered region spans residues 181–212 (NAELSGEEDEAEGPESARGSRPRGPKSAGEPR).

Belongs to the RimM family. As to quaternary structure, binds ribosomal protein uS19.

The protein localises to the cytoplasm. Its function is as follows. An accessory protein needed during the final step in the assembly of 30S ribosomal subunit, possibly for assembly of the head region. Essential for efficient processing of 16S rRNA. May be needed both before and after RbfA during the maturation of 16S rRNA. It has affinity for free ribosomal 30S subunits but not for 70S ribosomes. This is Ribosome maturation factor RimM from Chelativorans sp. (strain BNC1).